A 206-amino-acid polypeptide reads, in one-letter code: Small ribosomal subunit protein uS4 (206 aa).

The 61-residue stretch at 96-156 (GRLDNVVYRM…EKAKKQSRVK (61 aa)) folds into the S4 RNA-binding domain.

This sequence belongs to the universal ribosomal protein uS4 family. As to quaternary structure, part of the 30S ribosomal subunit. Contacts protein S5. The interaction surface between S4 and S5 is involved in control of translational fidelity.

One of the primary rRNA binding proteins, it binds directly to 16S rRNA where it nucleates assembly of the body of the 30S subunit. In terms of biological role, with S5 and S12 plays an important role in translational accuracy. The polypeptide is Small ribosomal subunit protein uS4 (Shigella flexneri).